We begin with the raw amino-acid sequence, 876 residues long: Vacuolar protein sorting-associated protein 39 homolog (876 aa).

The 297-residue stretch at 14 to 310 (GVQIESIAAY…KFLVHADKGT (297 aa)) folds into the CNH domain. One copy of the CHCR repeat lies at 578-741 (ELIEVESLPR…ILIPPTQPLY (164 aa)).

Belongs to the VAM6/VPS39 family. In terms of assembly, part of the homotypic fusion and vacuole protein sorting (HOPS) complex, composed of Vps16A, car/Vps33A, dor/Vps18, Vps39, Vps11 and lt/Vps41. Interacts with Rab2 (GTP-bound form); the interaction is probably direct.

The protein localises to the cytoplasm. Its subcellular location is the lysosome membrane. It is found in the late endosome membrane. The protein resides in the late endosome. It localises to the lysosome. Its function is as follows. Part of the homotypic fusion and vacuole protein sorting (HOPS) tethering complex involved in endo-lysosomal vesicle trafficking and lysosome biogenesis. The HOPS complex facilitates docking and fusion of lysosomes with late endosomes and several other types of vesicles. The HOPS complex is also involved in autophagy and crinophagy (the elimination of unused secretory granules through their fusion with lysosomes). The HOPS complex mediates autophagocitic flux, probably by binding autophagosome-associated Syx17/syntaxin 17, promoting assembly of the trans-SNARE complex and instigating autophagosome-lysosome fusion. Independent of Syx17/syntaxin 17, HOPS is involved in biosynthetic transport to lysosomes and lysosome-related organelles such as eye-pigment granules. Required for autophagocytosis-dependent remodeling of myofibrils and transverse-tubules (T-tubules) during metamorphosis. The protein is Vacuolar protein sorting-associated protein 39 homolog of Drosophila melanogaster (Fruit fly).